A 310-amino-acid polypeptide reads, in one-letter code: p-hydroxybenzoic acid efflux pump subunit AaeA (310 aa).

The chain crosses the membrane as a helical span at residues 12–32 (AITVVLVILAFIAIFNAWVYY).

It belongs to the membrane fusion protein (MFP) (TC 8.A.1) family.

The protein localises to the cell inner membrane. Functionally, forms an efflux pump with AaeB. The sequence is that of p-hydroxybenzoic acid efflux pump subunit AaeA from Escherichia coli O9:H4 (strain HS).